The primary structure comprises 598 residues: 2-succinyl-5-enolpyruvyl-6-hydroxy-3-cyclohexene-1-carboxylate synthase (598 aa).

This sequence belongs to the TPP enzyme family. MenD subfamily. As to quaternary structure, homodimer. Mg(2+) serves as cofactor. It depends on Mn(2+) as a cofactor. The cofactor is thiamine diphosphate.

The enzyme catalyses isochorismate + 2-oxoglutarate + H(+) = 5-enolpyruvoyl-6-hydroxy-2-succinyl-cyclohex-3-ene-1-carboxylate + CO2. It functions in the pathway quinol/quinone metabolism; 1,4-dihydroxy-2-naphthoate biosynthesis; 1,4-dihydroxy-2-naphthoate from chorismate: step 2/7. It participates in cofactor biosynthesis; phylloquinone biosynthesis. Its function is as follows. Catalyzes the thiamine diphosphate-dependent decarboxylation of 2-oxoglutarate and the subsequent addition of the resulting succinic semialdehyde-thiamine pyrophosphate anion to isochorismate to yield 2-succinyl-5-enolpyruvyl-6-hydroxy-3-cyclohexene-1-carboxylate (SEPHCHC). This Prochlorococcus marinus (strain NATL2A) protein is 2-succinyl-5-enolpyruvyl-6-hydroxy-3-cyclohexene-1-carboxylate synthase.